A 253-amino-acid polypeptide reads, in one-letter code: ATP synthase subunit a (253 aa).

Transmembrane regions (helical) follow at residues 30 to 50, 88 to 108, 118 to 138, 144 to 164, 184 to 204, and 211 to 231; these read FTNA…VLLA, FFPF…IGLV, IAVT…YGLI, FLGI…MIMI, MLAG…LLGA, and VAPL…LVAF.

This sequence belongs to the ATPase A chain family. In terms of assembly, F-type ATPases have 2 components, CF(1) - the catalytic core - and CF(0) - the membrane proton channel. CF(1) has five subunits: alpha(3), beta(3), gamma(1), delta(1), epsilon(1). CF(0) has three main subunits: a(1), b(2) and c(9-12). The alpha and beta chains form an alternating ring which encloses part of the gamma chain. CF(1) is attached to CF(0) by a central stalk formed by the gamma and epsilon chains, while a peripheral stalk is formed by the delta and b chains.

The protein localises to the cell inner membrane. Functionally, key component of the proton channel; it plays a direct role in the translocation of protons across the membrane. The protein is ATP synthase subunit a of Beijerinckia indica subsp. indica (strain ATCC 9039 / DSM 1715 / NCIMB 8712).